Reading from the N-terminus, the 90-residue chain is Small ribosomal subunit protein uS17 (90 aa).

Belongs to the universal ribosomal protein uS17 family. In terms of assembly, part of the 30S ribosomal subunit.

Its function is as follows. One of the primary rRNA binding proteins, it binds specifically to the 5'-end of 16S ribosomal RNA. This chain is Small ribosomal subunit protein uS17, found in Paraburkholderia phymatum (strain DSM 17167 / CIP 108236 / LMG 21445 / STM815) (Burkholderia phymatum).